The chain runs to 430 residues: Transcobalamin-2 (430 aa).

The first 18 residues, 1–18, serve as a signal peptide directing secretion; the sequence is MELLKALLLLSGVFGALA. Intrachain disulfides connect Cys-21–Cys-270, Cys-116–Cys-312, and Cys-165–Cys-208. Cob(II)alamin is bound by residues 152–156, His-193, 193–197, Asn-245, Ser-248, Gln-294, and 398–400; these read TNYYQ, HVSVD, and WQL.

The protein belongs to the eukaryotic cobalamin transport proteins family. Interacts with CD320 (via LDL-receptor class A domains).

It is found in the secreted. Functionally, primary vitamin B12-binding and transport protein. Delivers cobalamin to cells. This chain is Transcobalamin-2 (Tcn2), found in Mus musculus (Mouse).